The primary structure comprises 199 residues: ATP synthase subunit a (199 aa).

Helical transmembrane passes span 2 to 22 (NQVYFLDIFMFVFVLQFLFYF), 53 to 73 (VISVFTFIILLTCCFGGYFTY), 80 to 100 (MVEFTFVYAAVAWLSTLLTFI), 141 to 161 (LTVNIMVGHLISMMLYQGLEL), and 169 to 189 (WLSIFAIMMECFVFFIQSYIF).

Belongs to the ATPase A chain family. In terms of assembly, F-type ATPases have 2 components, CF(1) - the catalytic core - and CF(0) - the membrane proton channel. CF(1) has five subunits: alpha(3), beta(3), gamma(1), delta(1), epsilon(1). CF(0) has three main subunits: a, b and c.

Its subcellular location is the mitochondrion inner membrane. In terms of biological role, mitochondrial membrane ATP synthase (F(1)F(0) ATP synthase or Complex V) produces ATP from ADP in the presence of a proton gradient across the membrane which is generated by electron transport complexes of the respiratory chain. F-type ATPases consist of two structural domains, F(1) - containing the extramembraneous catalytic core and F(0) - containing the membrane proton channel, linked together by a central stalk and a peripheral stalk. During catalysis, ATP synthesis in the catalytic domain of F(1) is coupled via a rotary mechanism of the central stalk subunits to proton translocation. Key component of the proton channel; it may play a direct role in the translocation of protons across the membrane. The polypeptide is ATP synthase subunit a (atp6) (Caenorhabditis briggsae).